A 632-amino-acid chain; its full sequence is Polyadenylate-binding protein, cytoplasmic and nuclear (632 aa).

The segment covering 1 to 11 (MSAADANQLQE) has biased composition (polar residues). Residues 1-43 (MSAADANQLQESLEKLNLDSAPAAAEEEAVAAESAPAGEEGAD) are disordered. Positions 31–43 (AAESAPAGEEGAD) are enriched in low complexity. RRM domains are found at residues 52-130 (ASLY…WSQR), 140-217 (GNIF…KHIS), 233-310 (TNIY…RAQK), and 336-413 (VNLF…LAQR). A PABC domain is found at 534–615 (QQRDLAAIIA…ALTAFEEYKN (82 aa)).

Belongs to the polyadenylate-binding protein type-1 family.

Its subcellular location is the cytoplasm. It is found in the nucleus. Functionally, binds the poly(A) tail of mRNA. Appears to be an important mediator of the multiple roles of the poly(A) tail in mRNA biogenesis, stability and translation. In the nucleus, involved in both mRNA cleavage and polyadenylation. Is also required for efficient mRNA export to the cytoplasm. Acts in concert with a poly(A)-specific nuclease (PAN) to affect poly(A) tail shortening, which may occur concomitantly with either nucleocytoplasmic mRNA transport or translational initiation. In the cytoplasm, stimulates translation initiation and regulates mRNA decay through translation termination-coupled poly(A) shortening, probably mediated by PAN. This Scheffersomyces stipitis (strain ATCC 58785 / CBS 6054 / NBRC 10063 / NRRL Y-11545) (Yeast) protein is Polyadenylate-binding protein, cytoplasmic and nuclear (PAB1).